The following is a 130-amino-acid chain: MSMQDPIADMLTRIRNGQAANKAAVTMPSSKLKVAIANVLKEEGFIEDFKVEGDTKPELELTLKYFQGKAVVESIQRVSRPGLRIYKGKDELPKVMAGLGIAVVSTSKGVMTDRAARQAGLGGEIICYVA.

Belongs to the universal ribosomal protein uS8 family. Part of the 30S ribosomal subunit. Contacts proteins S5 and S12.

In terms of biological role, one of the primary rRNA binding proteins, it binds directly to 16S rRNA central domain where it helps coordinate assembly of the platform of the 30S subunit. The protein is Small ribosomal subunit protein uS8 of Salmonella arizonae (strain ATCC BAA-731 / CDC346-86 / RSK2980).